A 375-amino-acid polypeptide reads, in one-letter code: Peritrophin-48 (375 aa).

An N-terminal signal peptide occupies residues 1 to 20; it reads MIIKTLLASVAIMLIATVNA. Chitin-binding type-2 domains lie at 25–83, 86–143, 153–210, 224–292, and 294–360; these read AKYC…NCIL, DNPC…SDDD, LNIC…MCER, ETLC…GCNR, and EYTT…ACQN. A disulfide bond links cysteine 60 and cysteine 73. Asparagine 117 carries an N-linked (GlcNAc...) asparagine glycan. Intrachain disulfides connect cysteine 120/cysteine 133, cysteine 187/cysteine 200, cysteine 265/cysteine 278, and cysteine 330/cysteine 343. N-linked (GlcNAc...) asparagine glycosylation is present at asparagine 360.

Post-translationally, glycosylated. In terms of tissue distribution, cardia and midgut peritrophic membrane.

In terms of biological role, may bind chitin or related oligosaccharide structures. This is Peritrophin-48 from Lucilia cuprina (Green bottle fly).